The chain runs to 664 residues: L-glutamate oxidase precursor (664 aa).

The segment at residues 1-44 (MTEDHAVVRSDGGLSRRSFAAVAGTATVATALTSGVAAALPAPA) is a signal peptide (tat-type signal). Residues Ala105, Glu124, Ala125, Arg133, Met161, Arg162, Asp638, Trp646, and Ile647 each contribute to the FAD site.

The protein belongs to the flavin monoamine oxidase family. LGOX subfamily. In terms of assembly, the mature enzyme is a heterohexamer composed of 2 alpha chains, 2 beta chains and 2 gamma chains (alpha2beta2gamma2). It depends on FAD as a cofactor. Post-translationally, predicted to be exported by the Tat system. The position of the signal peptide cleavage has not been experimentally proven. In terms of processing, the precursor form is proteolytically cleaved by an endopeptidase into alpha, beta and gamma chains, which form the stable mature enzyme.

The protein resides in the secreted. It catalyses the reaction L-glutamate + O2 + H2O = H2O2 + 2-oxoglutarate + NH4(+). Its activity is regulated as follows. Activity is stimulated in the presence of Mn(2+), Ca(2+) or Mg(2+). In terms of biological role, catalyzes the oxidative deamination of L-glutamate to 2-ketoglutarate along with the production of ammonia and hydrogen peroxide. This Streptomyces viridosporus (strain ATCC 14672 / DSM 40746 / JCM 4963 / KCTC 9882 / NRRL B-12104 / FH 1290) (Streptomyces ghanaensis) protein is L-glutamate oxidase precursor.